The following is a 195-amino-acid chain: Probable nicotinate-nucleotide adenylyltransferase (195 aa).

It belongs to the NadD family.

The catalysed reaction is nicotinate beta-D-ribonucleotide + ATP + H(+) = deamido-NAD(+) + diphosphate. The protein operates within cofactor biosynthesis; NAD(+) biosynthesis; deamido-NAD(+) from nicotinate D-ribonucleotide: step 1/1. Functionally, catalyzes the reversible adenylation of nicotinate mononucleotide (NaMN) to nicotinic acid adenine dinucleotide (NaAD). In Mesorhizobium japonicum (strain LMG 29417 / CECT 9101 / MAFF 303099) (Mesorhizobium loti (strain MAFF 303099)), this protein is Probable nicotinate-nucleotide adenylyltransferase.